The primary structure comprises 351 residues: Cytosolic sulfotransferase 9 (351 aa).

Over residues 1–11 (MDEKDILRNLR) the composition is skewed to basic and acidic residues. The segment at 1–24 (MDEKDILRNLREEEEEEEENQSEE) is disordered. The segment covering 12 to 22 (EEEEEEEENQS) has biased composition (acidic residues). A 3'-phosphoadenylyl sulfate-binding site is contributed by 80–85 (KSGTTW). H152 (proton acceptor) is an active-site residue. 3'-phosphoadenylyl sulfate-binding positions include R174, S182, Y252, and 317-319 (RKG).

The protein belongs to the sulfotransferase 1 family. Expressed in roots and leaves.

Its subcellular location is the cytoplasm. Its function is as follows. Sulfotransferase that utilizes 3'-phospho-5'-adenylyl sulfate (PAPS) as sulfonate donor. No activity with brassinosteroids. The sequence is that of Cytosolic sulfotransferase 9 (STO9) from Arabidopsis thaliana (Mouse-ear cress).